We begin with the raw amino-acid sequence, 425 residues long: CBS domain-containing protein CBSX6 (425 aa).

Residues 16 to 90 form the CBS 1 domain; sequence GKPEMVEFYE…FLAKTECLQE (75 aa). Positions 159 to 172 are enriched in low complexity; sequence SENSSSSSGLSADS. The segment at 159–182 is disordered; the sequence is SENSSSSSGLSADSTNRPTTSMTS. Residues 173–182 are compositionally biased toward polar residues; the sequence is TNRPTTSMTS. 2 helical membrane passes run 200-220 and 275-295; these read IGVL…LGII and YLAA…MGVE. Residues 347–409 enclose the CBS 2 domain; sequence MYRGRSAPLT…TAVTKQPSAF (63 aa).

The protein localises to the vacuole membrane. In Arabidopsis thaliana (Mouse-ear cress), this protein is CBS domain-containing protein CBSX6 (CBSX6).